The primary structure comprises 280 residues: uncharacterized protein (280 aa).

The N-terminal 51 residues, 1-51 (MATSLLLRHSSAVFFSQSSFFTKNKSFRSFTSIKMEKGEAENAVKTKKVFV), are a transit peptide targeting the chloroplast.

It belongs to the NAD(P)-dependent epimerase/dehydratase family.

The protein resides in the plastid. It is found in the chloroplast. Its subcellular location is the plastoglobule. This is an uncharacterized protein from Arabidopsis thaliana (Mouse-ear cress).